A 1121-amino-acid chain; its full sequence is Brassinosteroid LRR receptor kinase BRI1 (1121 aa).

The first 24 residues, 1-24, serve as a signal peptide directing secretion; sequence MDSLWAAIAALFVAAAVVVRGAAA. A Cys pair 1 motif is present at residues 54-61; that stretch reads CRFPGAGC. LRR repeat units follow at residues 90 to 114, 116 to 142, 144 to 167, 170 to 193, 197 to 221, 223 to 243, 244 to 268, 269 to 292, 294 to 317, 318 to 341, 343 to 367, 369 to 391, 392 to 415, 416 to 439, 441 to 463, 464 to 487, and 489 to 511; these read LGSVEVLSLRGANVSGALSAAGGAR, GSKLQALDLSGNAALRGSVADVAALAS, CGGLKTLNLSGDAVGAAKVGGGGG, FAGLDSLDLSNNKITDDSDLRWMV, VGAVRWLDLALNRISGVPEFTNCSG, QYLDLSGNLIVGEVPGGALSD, CRGLKVLNLSFNHLAGVFPPDIAGL, TSLNALNLSNNNFSGELPGEAFAK, QQLTALSLSFNHFNGSIPDTVASL, PELQQLDLSSNTFSGTIPSSLCQD, NSKLHLLYLQNNYLTGGIPDAVSNC, SLVSLDLSLNYINGSIPASLGDL, GNLQDLILWQNELEGEIPASLSRI, QGLEHLILDYNGLTGSIPPELAKC, KLNWISLASNRLSGPIPSWLGKL, SYLAILKLSNNSFSGPIPPELGDC, and SLVWLDLNSNQLNGSIPKELAKQ. An N-linked (GlcNAc...) asparagine glycan is attached at asparagine 102. A glycan (N-linked (GlcNAc...) asparagine) is linked at asparagine 151. Asparagine 218 carries an N-linked (GlcNAc...) asparagine glycan. Asparagine 251, asparagine 275, asparagine 280, and asparagine 307 each carry an N-linked (GlcNAc...) asparagine glycan. N-linked (GlcNAc...) asparagine glycosylation is found at asparagine 366 and asparagine 381. 2 N-linked (GlcNAc...) asparagine glycosylation sites follow: asparagine 473 and asparagine 501. Tyrosine 525 is a binding site for brassinolide. Residues 541–564 form an LRR 18 repeat; the sequence is GSLLEFTSIRPDDLSRMPSKKLCN. Asparagine 564 is a glycosylation site (N-linked (GlcNAc...) asparagine). Tyrosine 569 contributes to the brassinolide binding site. An N-linked (GlcNAc...) asparagine glycan is attached at asparagine 580. LRR repeat units lie at residues 580–603, 604–628, 629–651, and 652–676; these read NGSMIFLDLSYNQLDSAIPGELGD, MFYLMIMNLGHNLLSGTIPSRLAEA, KKLAVLDLSYNQLEGPIPNSFSA, and LSLSEINLSNNQLNGTIPELGSLAT. 3 N-linked (GlcNAc...) asparagine glycosylation sites follow: asparagine 658, asparagine 665, and asparagine 684. Residues 689–696 carry the Cys pair 2 motif; it reads CGFPLPPC. Positions 693-712 are disordered; the sequence is LPPCDHSSPRSSNDHQSHRR. Residues 719-739 traverse the membrane as a helical segment; the sequence is SIAMGLLFSLFCIIVIIIAIG. The 277-residue stretch at 807–1083 folds into the Protein kinase domain; sequence FHIACQIGSG…LKVMAMFKEI (277 aa). ATP contacts are provided by residues 813-821, lysine 835, 881-883, 887-890, 933-938, and aspartate 951; these read IGSGGFGDV, DYM, SLED, and DMKSSN. The active-site Proton acceptor is the aspartate 933.

The protein belongs to the protein kinase superfamily. Ser/Thr protein kinase family. In terms of assembly, interacts with BIP103 and BIP131. Interacts with BAK1. Interacts with BSK3. Interacts with SERK2. As to expression, highly expressed in shoots. Expressed at low levels in roots.

It is found in the cell membrane. It catalyses the reaction L-seryl-[protein] + ATP = O-phospho-L-seryl-[protein] + ADP + H(+). It carries out the reaction L-threonyl-[protein] + ATP = O-phospho-L-threonyl-[protein] + ADP + H(+). In terms of biological role, receptor kinase involved brassinosteroid (BR) signal transduction. Regulates, in response to BR binding, a signaling cascade involved in plant development, promotion of cell elongation and flowering. Activates BR signaling by targeting and phosphorylating BSK3, a positive regulator of BR signaling. Forms at the plasma membrane a receptor complex with BAK1 which is activated in response to brassinolide. Phosphorylates BAK1. Phosphorylates REM4.1, which reduces REM4.1 binding affinity to BAK1 and allows the formation and subsequent activation of the BRI1-BAK1 receptor complex. Functions in various growth and developmental processes, such as internode elongation, bending of the lamina joint and skotomorphogenesis. Functions in internode elongation by inducing the formation of the intercalary meristem and the longitudinal elongation of internode cells. Involved in organ development through the control of cell division and elongation. Does not seem essential for organ pattern formation or organ initiation. The polypeptide is Brassinosteroid LRR receptor kinase BRI1 (Oryza sativa subsp. japonica (Rice)).